Reading from the N-terminus, the 300-residue chain is Type II restriction enzyme HindIII (300 aa).

It catalyses the reaction Endonucleolytic cleavage of DNA to give specific double-stranded fragments with terminal 5'-phosphates.. A P subtype restriction enzyme that recognizes the double-stranded sequence 5'-AAGCTT-3' and cleaves after A-1. In Haemophilus influenzae (strain ATCC 51907 / DSM 11121 / KW20 / Rd), this protein is Type II restriction enzyme HindIII.